A 110-amino-acid chain; its full sequence is Movement protein TGB2 (110 aa).

Over 1–10 (MSGAHHLTPP) the chain is Cytoplasmic. The chain crosses the membrane as a helical span at residues 11–34 (TDYGKPVLAASIGISLALLVYTAT). Topologically, residues 35–76 (RSTLPHVGDNLHALPHGGRYVDGTKSISYFSPSASKTRDPFP) are lumenal. Residues 77–92 (FAFLLILTLSGLILLL) form a helical membrane-spanning segment. At 93–110 (SRRRSNPHSCPSCGTPHA) the chain is on the cytoplasmic side.

This sequence belongs to the Tymovirales TGBp2 protein family.

The protein resides in the host endoplasmic reticulum membrane. Plays a role in viral cell-to-cell propagation, by facilitating genome transport to neighboring plant cells through plasmosdesmata,. The sequence is that of Movement protein TGB2 from Plantago asiatica (P1AMV).